The sequence spans 266 residues: UPF0246 protein Pcryo_0542 (266 aa).

It belongs to the UPF0246 family.

This chain is UPF0246 protein Pcryo_0542, found in Psychrobacter cryohalolentis (strain ATCC BAA-1226 / DSM 17306 / VKM B-2378 / K5).